Here is an 895-residue protein sequence, read N- to C-terminus: Zinc finger protein 281 (895 aa).

Disordered regions lie at residues 1-44 and 63-113; these read MKIG…EMEP and FTRP…AFPS. Residue lysine 2 forms a Glycyl lysine isopeptide (Lys-Gly) (interchain with G-Cter in SUMO2) linkage. Residues 7-36 show a composition bias toward gly residues; sequence FLSGGGGTGSSGGSGSGGGGSGGGGGGGSS. Residues arginine 65, lysine 101, and lysine 128 each participate in a glycyl lysine isopeptide (Lys-Gly) (interchain with G-Cter in SUMO2) cross-link. Basic and acidic residues-rich tracts occupy residues 130-140 and 202-218; these read EKPADPEEQQS and RTDDHHGTEEPKQDTNV. 2 disordered regions span residues 130–149 and 183–253; these read EKPADPEEQQSHHHHHHHHY and HVQQ…EGAI. Glycyl lysine isopeptide (Lys-Gly) (interchain with G-Cter in SUMO2) cross-links involve residues lysine 213, lysine 219, lysine 225, lysine 232, lysine 242, and lysine 259. C2H2-type zinc fingers lie at residues 261 to 283, 289 to 311, and 317 to 339; these read HICDHCSAAFRSSYHLRRHVLIH, FQCSQCSMGFIQKYLLQRHEKIH, and FGCDQCSMKFIQKYHMERHKRTH. Glycyl lysine isopeptide (Lys-Gly) (interchain with G-Cter in SUMO2) cross-links involve residues lysine 301 and lysine 325. The C2H2-type 4; atypical zinc finger occupies 345 to 367; the sequence is YKCDTCQQYFSRTDRLLKHRRTC. Residue lysine 373 forms a Glycyl lysine isopeptide (Lys-Gly) (interchain with G-Cter in SUMO2) linkage. The segment at 377–427 is disordered; the sequence is SAEPGSSNHTNMGNLAVLSQGNTSSSRRKTKSKSIAIENKEQKTGKTNESQ. Over residues 379–398 the composition is skewed to polar residues; sequence EPGSSNHTNMGNLAVLSQGN. Serine 395 is subject to Phosphoserine. Residues lysine 409, lysine 416, lysine 460, and lysine 477 each participate in a glycyl lysine isopeptide (Lys-Gly) (interchain with G-Cter in SUMO2) cross-link. Position 484 is a phosphoserine (serine 484). Glycyl lysine isopeptide (Lys-Gly) (interchain with G-Cter in SUMO2) cross-links involve residues lysine 493, lysine 498, lysine 539, lysine 599, lysine 617, and lysine 622. Residues 638-660 are disordered; the sequence is SGEHSELVQEENLSPGTQTPSND. Polar residues predominate over residues 648-660; it reads ENLSPGTQTPSND. Position 651 is a phosphoserine (serine 651). Residues lysine 661 and lysine 670 each participate in a glycyl lysine isopeptide (Lys-Gly) (interchain with G-Cter in SUMO2) cross-link. Positions 778-789 are enriched in polar residues; that stretch reads SSAFQSSSQKLT. Residues 778–817 are disordered; it reads SSAFQSSSQKLTSQKEQKNLESSTGFQIPSQELASQIDPQ. At serine 785 the chain carries Phosphoserine. Residues lysine 787, lysine 792, and lysine 795 each participate in a glycyl lysine isopeptide (Lys-Gly) (interchain with G-Cter in SUMO2) cross-link. Residues 797-815 show a composition bias toward polar residues; the sequence is LESSTGFQIPSQELASQID. Serine 807 carries the phosphoserine modification. Residues lysine 818 and lysine 840 each participate in a glycyl lysine isopeptide (Lys-Gly) (interchain with G-Cter in SUMO2) cross-link. Phosphothreonine is present on threonine 888.

Belongs to the krueppel C2H2-type zinc-finger protein family.

The protein resides in the nucleus. Its function is as follows. Transcription repressor that plays a role in regulation of embryonic stem cells (ESCs) differentiation. Required for ESCs differentiation and acts by mediating autorepression of NANOG in ESCs: binds to the NANOG promoter and promotes association of NANOG protein to its own promoter and recruits the NuRD complex, which deacetylates histones. Not required for establishement and maintenance of ESCs. Represses the transcription of a number of genes including GAST, ODC1 and VIM. Binds to the G-rich box in the enhancer region of these genes. The sequence is that of Zinc finger protein 281 (ZNF281) from Homo sapiens (Human).